Reading from the N-terminus, the 778-residue chain is Endonuclease MutS2 (778 aa).

329–336 (GPNTGGKT) lines the ATP pocket. The Smr domain maps to 703-778 (LDLRGKRYEE…GSGCTIVTFK (76 aa)).

Belongs to the DNA mismatch repair MutS family. MutS2 subfamily. Homodimer. Binds to stalled ribosomes, contacting rRNA.

Endonuclease that is involved in the suppression of homologous recombination and thus may have a key role in the control of bacterial genetic diversity. Functionally, acts as a ribosome collision sensor, splitting the ribosome into its 2 subunits. Detects stalled/collided 70S ribosomes which it binds and splits by an ATP-hydrolysis driven conformational change. Acts upstream of the ribosome quality control system (RQC), a ribosome-associated complex that mediates the extraction of incompletely synthesized nascent chains from stalled ribosomes and their subsequent degradation. Probably generates substrates for RQC. This chain is Endonuclease MutS2, found in Streptococcus suis (strain 98HAH33).